The primary structure comprises 401 residues: uncharacterized protein (401 aa).

Residues Cys-7, Cys-13, Cys-16, and Cys-94 each coordinate [4Fe-4S] cluster. S-adenosyl-L-methionine contacts are provided by Gln-230, Tyr-259, Glu-280, and Asp-328. Catalysis depends on Cys-355, which acts as the Nucleophile.

The protein belongs to the class I-like SAM-binding methyltransferase superfamily. RNA M5U methyltransferase family.

This is an uncharacterized protein from Chlamydia pneumoniae (Chlamydophila pneumoniae).